A 354-amino-acid polypeptide reads, in one-letter code: E2F transcription factor-like E2FF (354 aa).

A DNA-binding region spans residues 21 to 86; sequence RKEKSLGVLV…RGKNQYSWKG (66 aa). The disordered stretch occupies residues 104 to 143; sequence ERLGYSSSNNSDKVSNGCEREEPLTLTPDDQENSSSSKMD. Residues 108-117 show a composition bias toward polar residues; the sequence is YSSSNNSDKV. Residues 145-225 mediate DNA binding; that stretch reads KKEKSLWLLA…TRKPAYRWLG (81 aa).

The protein belongs to the E2F/DP family. High expression in young cotyledons and leaves, hypocotyls, shoot apical meristem, roots and mature pollen grains, moderate in developing trichomes, flowers and at early stages of developing anthers, and barely detectable in mature leaves. Not detected in primary root meristem, emerging lateral roots, pistils, developing embryos and siliques.

It localises to the nucleus. Its subcellular location is the cytoplasm. Functionally, inhibitor of E2F-dependent activation of gene expression. Binds specifically the E2 recognition site without interacting with DP proteins and prevents transcription activation by E2F/DP heterodimers. Does not bind retinoblastoma-related proteins. Acts as a growth regulator but is not associated with changes in the expression of cell cycle marker genes or in nuclear ploidy levels. Has no effect on cell proliferation, but may repress cell wall biosynthesis genes during cell elongation in differentiated cells. This is E2F transcription factor-like E2FF (E2FF) from Arabidopsis thaliana (Mouse-ear cress).